A 391-amino-acid chain; its full sequence is Putative alpha-ketoglutarate-dependent sulfonate dioxygenase (391 aa).

Residues His-204 and Asp-206 each contribute to the Fe cation site. Thr-231 and Trp-338 together coordinate 2-oxoglutarate. His-353 lines the Fe cation pocket. Arg-364 and Arg-368 together coordinate 2-oxoglutarate.

Belongs to the TfdA dioxygenase family. Requires Fe(2+) as cofactor.

It functions in the pathway organosulfur degradation; alkanesulfonate degradation. Its function is as follows. Acts as an alpha-ketoglutarate-dependent dioxygenase active on sulfonates. The protein is Putative alpha-ketoglutarate-dependent sulfonate dioxygenase of Schizosaccharomyces pombe (strain 972 / ATCC 24843) (Fission yeast).